A 252-amino-acid polypeptide reads, in one-letter code: Triosephosphate isomerase (252 aa).

Position 10–12 (10–12) interacts with substrate; it reads NWK. Catalysis depends on His96, which acts as the Electrophile. Glu168 acts as the Proton acceptor in catalysis. Substrate contacts are provided by residues Gly174, Ser214, and 235 to 236; that span reads GG.

It belongs to the triosephosphate isomerase family. In terms of assembly, homodimer.

It is found in the cytoplasm. It catalyses the reaction D-glyceraldehyde 3-phosphate = dihydroxyacetone phosphate. It participates in carbohydrate biosynthesis; gluconeogenesis. Its pathway is carbohydrate degradation; glycolysis; D-glyceraldehyde 3-phosphate from glycerone phosphate: step 1/1. In terms of biological role, involved in the gluconeogenesis. Catalyzes stereospecifically the conversion of dihydroxyacetone phosphate (DHAP) to D-glyceraldehyde-3-phosphate (G3P). In Lactobacillus helveticus (strain DPC 4571), this protein is Triosephosphate isomerase.